We begin with the raw amino-acid sequence, 497 residues long: Glutamate--tRNA ligase (497 aa).

Positions 13 to 23 (PSPTGTPHVGM) match the 'HIGH' region motif. The short motif at 257 to 261 (KLSKR) is the 'KMSKS' region element. Lys-260 lines the ATP pocket.

This sequence belongs to the class-I aminoacyl-tRNA synthetase family. Glutamate--tRNA ligase type 1 subfamily. Monomer.

The protein resides in the cytoplasm. The catalysed reaction is tRNA(Glu) + L-glutamate + ATP = L-glutamyl-tRNA(Glu) + AMP + diphosphate. Its function is as follows. Catalyzes the attachment of glutamate to tRNA(Glu) in a two-step reaction: glutamate is first activated by ATP to form Glu-AMP and then transferred to the acceptor end of tRNA(Glu). In Corynebacterium diphtheriae (strain ATCC 700971 / NCTC 13129 / Biotype gravis), this protein is Glutamate--tRNA ligase.